Here is a 682-residue protein sequence, read N- to C-terminus: Probable xyloglucan glycosyltransferase 6 (682 aa).

2 consecutive transmembrane segments (helical) span residues 109 to 129 and 173 to 193; these read LIKG…AAYF and IVLF…CFWI. Asp260 is a catalytic residue. The substrate site is built by Asp319 and Asp321. Asp413 is a catalytic residue. Transmembrane regions (helical) follow at residues 491 to 511 and 516 to 536; these read LILP…TMFF and LPSW…IIPA. Ser608 bears the Phosphoserine mark. Helical transmembrane passes span 632–651 and 657–677; these read LYRT…VRSL and IHFY…LDLI.

Belongs to the glycosyltransferase 2 family. Plant cellulose synthase-like C subfamily. Homodimer. As to expression, mainly expressed in flowers and seeds, and, to a lower extent, in seedlings, roots, leaves and stems.

It is found in the golgi apparatus membrane. Functionally, probable beta-1,4-glucan synthase rather involved in the synthesis of the xyloglucan backbone than cellulose. Seems to work simultaneously with xyloglucan 6-xylosyltransferase. Xyloglucan is a noncellulosic polysaccharides of plant cell wall and consists of a glucan backbone substituted by xylose, galactose and fucose. This Arabidopsis thaliana (Mouse-ear cress) protein is Probable xyloglucan glycosyltransferase 6.